The sequence spans 551 residues: Cation/acetate symporter ActP (551 aa).

Helical transmembrane passes span Ala-8–Val-28, Trp-35–Ala-55, Gly-78–Val-98, Gly-105–Glu-125, Leu-151–Ala-171, Val-185–Ala-205, Trp-208–Val-228, Ile-264–Leu-284, Gly-305–Val-325, Leu-357–Leu-377, Val-406–Glu-426, Ile-430–Leu-450, Val-465–Trp-485, and Phe-496–Phe-516.

This sequence belongs to the sodium:solute symporter (SSF) (TC 2.A.21) family.

Its subcellular location is the cell inner membrane. Its function is as follows. Transports acetate. This Klebsiella pneumoniae (strain 342) protein is Cation/acetate symporter ActP.